The following is a 226-amino-acid chain: Sugar fermentation stimulation protein homolog (226 aa).

This sequence belongs to the SfsA family.

The sequence is that of Sugar fermentation stimulation protein homolog from Clostridium beijerinckii (strain ATCC 51743 / NCIMB 8052) (Clostridium acetobutylicum).